Reading from the N-terminus, the 717-residue chain is Asp/Glu-specific dipeptidyl-peptidase (717 aa).

The N-terminal stretch at 1–21 (MNKRFFPTLLLAFVCSTLAYA) is a signal peptide. Catalysis depends on charge relay system residues H85, D226, and S652.

The protein belongs to the peptidase S46 family.

The protein resides in the secreted. Its subcellular location is the cell surface. Its activity is regulated as follows. Enzyme activity is completely blocked by diisopropyl-fluorophosphates, moderately by phenylmethylsulfonyl fluoride (PMSF) and 4-(2-methyl)benzenesulfonyl fluoride, and slightly by pepstatin in vitro. Its function is as follows. Catalyzes the removal of dipeptides from the N-terminus of oligopeptides. Shows a strict specificity for acidic residues (Asp or Glu) in the P1 position, and has a hydrophobic residue preference at the P2 position. Is likely involved in amino acid metabolism and bacterial growth/survival of asaccharolytic P.endodontalis, that utilizes amino acids from extracellular proteinaceous nutrients as energy and carbon sources. The chain is Asp/Glu-specific dipeptidyl-peptidase (dpp11) from Porphyromonas endodontalis (strain ATCC 35406 / DSM 24491 / JCM 8526 / CCUG 16442 / BCRC 14492 / NCTC 13058 / HG 370) (Bacteroides endodontalis).